The primary structure comprises 2760 residues: A-kinase anchor protein 13 (2760 aa).

Disordered stretches follow at residues 356–388 (CSHK…QDSC), 442–517 (PDAR…EPKQ), 530–577 (AAGA…VLPA), 604–711 (SSLD…AAHN), 729–857 (EKDL…EQEG), 890–940 (GGSI…QEIS), 954–1029 (EKAL…ASEA), and 1132–1162 (EGTD…DLPT). A compositionally biased stretch (polar residues) spans 378–388 (DSRSASHQDSC). Basic and acidic residues predominate over residues 442–454 (PDARQHSSGRELP). The segment at 482–504 (QNSKPQVGESAKERLENSDISSA) is important for interaction with PRKAR2A. The span at 530-547 (AAGADAPAEASPAWSPEE) shows a compositional bias: low complexity. Polar residues-rich tracts occupy residues 620–638 (KQNS…SQAP), 654–664 (CPQSTETSSGG), and 701–711 (DTVTSDTAAHN). Low complexity predominate over residues 769–780 (SSFSLASSPESE). The residue at position 776 (Ser-776) is a Phosphoserine. Thr-801 is modified (phosphothreonine). Basic and acidic residues predominate over residues 814 to 826 (PDGRDLNDTDKVG). Polar residues predominate over residues 839 to 849 (ELQTSMGNTSP). The segment covering 906 to 931 (GKDKATKCPSVKEDVHSSEMSREDQR) has biased composition (basic and acidic residues). Thr-932 carries the phosphothreonine modification. 2 stretches are compositionally biased toward polar residues: residues 958–972 (QHSN…CLQT) and 1001–1020 (TSLS…SGSS). Residue Ser-962 is modified to Phosphoserine. Residues 1213–1228 (SIEETATRIVEAVIKQ) form an important for interaction with PRKAR2A region. Disordered regions lie at residues 1392–1411 (GVLQ…PSDE), 1425–1508 (LLCD…VPAN), and 1520–1539 (SPFR…DAEM). Low complexity predominate over residues 1428–1439 (DTTGSSSSTDDT). Polar residues predominate over residues 1449–1472 (GSDVSLPQTSKLNRSRNHQSSNGF). Residues Ser-1450, Ser-1468, Ser-1501, Ser-1526, and Ser-1585 each carry the phosphoserine modification. Positions 1546-1695 (QVLGHVVRRP…SRPFHSASAN (150 aa)) are important for interaction with MAP2K3. The disordered stretch occupies residues 1592-1628 (GGGVGNKPSSSLEISSANSSELRNPFSGEEQRSSLMS). Low complexity predominate over residues 1600–1611 (SSSLEISSANSS). Ser-1625, Ser-1628, and Ser-1630 each carry phosphoserine. Position 1654 is an N6-methyllysine (Lys-1654). Positions 1733 to 1755 (RNKMSSSKKSKKEKDKKTLNGHT) are disordered. The Phorbol-ester/DAG-type zinc finger occupies 1753 to 1800 (GHTFSPIPIVGPINCSQCMKPFTNKDAYTCASCGAFVHKGCRENLASC). 3 positions are modified to phosphoserine: Ser-1838, Ser-1857, and Ser-1891. Residues 1881 to 2760 (MSNTWKFLSH…VPAEGEEIFC (880 aa)) form an interaction with ESR1 region. Residue Thr-1892 is modified to Phosphothreonine. A phosphoserine mark is found at Ser-1894 and Ser-1907. The DH domain occupies 1956–2153 (KRQEVIYELM…KDVIGAVDSK (198 aa)). The PH domain maps to 2176-2280 (MRMKSGQMFA…WIQIIQDTIN (105 aa)). Ser-2292 and Ser-2345 each carry phosphoserine. The stretch at 2292–2329 (SENEEEKRLLDTKARELKEQLQQKDQQILLLLEEKEMI) forms a coiled coil. A Phosphothreonine modification is found at Thr-2415. The tract at residues 2422-2450 (HQLNASKGGEKEEGDDGQDLRRTESDSGL) is disordered. A compositionally biased stretch (basic and acidic residues) spans 2439 to 2450 (QDLRRTESDSGL). 2 positions are modified to phosphoserine: Ser-2511 and Ser-2514. A coiled-coil region spans residues 2516–2632 (LIEQEKQRSL…LSQRQMEQDL (117 aa)). 2 disordered regions span residues 2568-2588 (AERE…REEL) and 2660-2760 (TPSI…EIFC). Composition is skewed to polar residues over residues 2660–2684 (TPSI…SISR) and 2696–2711 (SSAS…SQAP). Ser-2676 carries the post-translational modification Phosphoserine. The segment covering 2743–2752 (PGDGPAPEVP) has biased composition (low complexity).

Interacts with the cAMP-dependent protein kinase (PKA) holoenzyme and with the regulatory subunit PRKAR2A. Interacts with RHOA. Also interacts with RHOB and RHOC. Identified in a ternary complex with RHOA and PRKAR2A. Identified in a complex with NR3C1 and RHOA. Interacts with BRAF and KSR1. Identified in a complex with BRAF and KSR1. Component of a signaling complex containing at least AKAP13, PKN1, MAPK14, ZAK and MAP2K3. Within this complex, AKAP13 interacts directly with PKN1, which in turn recruits MAPK14, MAP2K3 and ZAK. Interacts (phosphorylated form) with YWHAB and YWHAZ. Interaction with YWHAB inhibits activation of RHOA, interferes with PKN1 binding and activation of MAP kinases. Interacts with GNA12. Interacts with IKBKB. Interacts with ESR1, THRA, PPARA and NME2. Interacts (via the C-terminal domain after the PH domain) with MEF2C and RXRB. Interacts (via the C-terminal domain after the PH domain) with PRKD1. In terms of tissue distribution, detected in bone osteoblasts (at protein level).

It is found in the cytoplasm. It localises to the cytosol. Its subcellular location is the cell cortex. The protein resides in the nucleus. The protein localises to the membrane. Its function is as follows. Scaffold protein that plays an important role in assembling signaling complexes downstream of several types of G protein-coupled receptors. Activates RHOA in response to signaling via G protein-coupled receptors via its function as Rho guanine nucleotide exchange factor. May also activate other Rho family members. Part of a kinase signaling complex that links ADRA1A and ADRA1B adrenergic receptor signaling to the activation of downstream p38 MAP kinases, such as MAPK11 and MAPK14. Part of a signaling complex that links ADRA1B signaling to the activation of RHOA and IKBKB/IKKB, leading to increased NF-kappa-B transcriptional activity. Part of a RHOA-dependent signaling cascade that mediates responses to lysophosphatidic acid (LPA), a signaling molecule that activates G-protein coupled receptors and potentiates transcriptional activation of the glucocorticoid receptor NR3C1. Part of a signaling cascade that stimulates MEF2C-dependent gene expression in response to lysophosphatidic acid (LPA). Part of a signaling pathway that activates MAPK11 and/or MAPK14 and leads to increased transcription activation of the estrogen receptors ESR1 and ESR2. Part of a signaling cascade that links cAMP and EGFR signaling to BRAF signaling and to PKA-mediated phosphorylation of KSR1, leading to the activation of downstream MAP kinases, such as MAPK1 or MAPK3. Functions as a scaffold protein that anchors cAMP-dependent protein kinase (PKA) and PRKD1. This promotes activation of PRKD1, leading to increased phosphorylation of HDAC5 and ultimately cardiomyocyte hypertrophy. Has no guanine nucleotide exchange activity on CDC42, Ras or Rac. Required for normal embryonic heart development, and in particular for normal sarcomere formation in the developing cardiomyocytes. Plays a role in cardiomyocyte growth and cardiac hypertrophy in response to activation of the beta-adrenergic receptor by phenylephrine or isoproterenol. Required for normal adaptive cardiac hypertrophy in response to pressure overload. Plays a role in osteogenesis. The polypeptide is A-kinase anchor protein 13 (Rattus norvegicus (Rat)).